The sequence spans 201 residues: Ras-related protein RabA (201 aa).

Residue G15–S22 coordinates GTP. The short motif at Y37 to F45 is the Effector region element. Residues D63–Q67 and N121–D124 each bind GTP. C198 bears the Cysteine methyl ester mark. C198 is lipidated: S-geranylgeranyl cysteine. The propeptide at I199–N201 is removed in mature form.

The protein belongs to the small GTPase superfamily. Rab family.

It localises to the cell membrane. This Dictyostelium discoideum (Social amoeba) protein is Ras-related protein RabA (rabA).